Consider the following 315-residue polypeptide: Probable cell division protein WhiA (315 aa).

The H-T-H motif DNA-binding region spans 280 to 313; sequence SLKELGQMLDPQVGKSGINHRLRKIEKIAEELRT.

It belongs to the WhiA family.

Functionally, involved in cell division and chromosome segregation. In Clostridium botulinum (strain Alaska E43 / Type E3), this protein is Probable cell division protein WhiA.